The primary structure comprises 57 residues: Large ribosomal subunit protein bL32 (57 aa).

Over residues 1-19 the composition is skewed to basic residues; the sequence is MAVPKRRMSRSNTRSRRSQ. Positions 1-21 are disordered; it reads MAVPKRRMSRSNTRSRRSQWK.

It belongs to the bacterial ribosomal protein bL32 family.

In Mycobacteroides abscessus (strain ATCC 19977 / DSM 44196 / CCUG 20993 / CIP 104536 / JCM 13569 / NCTC 13031 / TMC 1543 / L948) (Mycobacterium abscessus), this protein is Large ribosomal subunit protein bL32.